We begin with the raw amino-acid sequence, 118 residues long: Protein YLR162W (118 aa).

Polar residues predominate over residues 1 to 20; the sequence is MQHTLTRTASLPERSSSAHS. Residues 1–26 are disordered; that stretch reads MQHTLTRTASLPERSSSAHSAATALP. A helical transmembrane segment spans residues 38–58; sequence LVPLLCIFWFVFVSMSPLPPA.

It localises to the membrane. Its function is as follows. Overexpression confers resistance to the antimicrobial peptide MiAMP1. This Saccharomyces cerevisiae (strain ATCC 204508 / S288c) (Baker's yeast) protein is Protein YLR162W.